The sequence spans 210 residues: Prolactin (210 aa).

An N-terminal signal peptide occupies residues 1-23; it reads MAEGSRLYFAVTVLMCAFVSING. Cystine bridges form between Cys-69-Cys-183 and Cys-200-Cys-210.

Belongs to the somatotropin/prolactin family. Pituitary gland.

The protein localises to the secreted. This chain is Prolactin (prl), found in Hypophthalmichthys nobilis (Bighead carp).